Consider the following 1457-residue polypeptide: NBPF family member NBPF12 (1457 aa).

Residues 75–119 adopt a coiled-coil conformation; sequence RQFKEEKLAEQLKQAEELRQYKVLVHSQERELTQLREKLREGRDA. The disordered stretch occupies residues 162 to 200; that stretch reads LSPENDEDEDEDVQVEEDEKVLESSAPREVQKAEESKVP. Residues 165–181 are compositionally biased toward acidic residues; the sequence is ENDEDEDEDVQVEEDEK. The 95-residue stretch at 165 to 259 folds into the Olduvai 1 domain; it reads ENDEDEDEDV…ECQDALNILP (95 aa). Residues 190 to 200 show a composition bias toward basic and acidic residues; sequence EVQKAEESKVP. A coiled-coil region spans residues 339–390; sequence KSMLRNELQFKEEKLAEQLKQAEELRQYKVLVHSQERELTQLREKLREGRDA. Positions 432 to 472 are disordered; that stretch reads KLSPENDEDEDEDVQVEEDEKVLESSSPREMQKAEESKVPE. The segment covering 436–452 has biased composition (acidic residues); that stretch reads ENDEDEDEDVQVEEDEK. The Olduvai 2 domain occupies 436–530; sequence ENDEDEDEDV…ECQDALNILP (95 aa). The segment covering 461–472 has biased composition (basic and acidic residues); it reads EMQKAEESKVPE. Positions 610–661 form a coiled coil; the sequence is KSMLRNELQFKEEKLAEQLKQAEELRQYKVLVHSQERELTQLREKLREGRDA. 9 consecutive Olduvai domains span residues 707-799, 800-871, 872-963, 966-1021, 1022-1114, 1115-1207, 1210-1265, 1266-1358, and 1359-1457; these read ENDN…HIIP, ENES…VDIG, RHRW…PSCP, SREL…LDVD, RIKK…RSKK, KRRR…PSCP, and KRRR…IFPQ. Disordered stretches follow at residues 721–746 and 791–838; these read AEKV…EDSL and WEDA…GYST. 2 stretches are compositionally biased toward acidic residues: residues 801–810 and 821–833; these read NESDDEEEEE and ESEE…ESWD. The tract at residues 1100-1139 is disordered; the sequence is KKGKGKKRRGRRSKKKRRRGRKEGEEDQNPPCPRLSRELL. Residues 1102-1120 are compositionally biased toward basic residues; it reads GKGKKRRGRRSKKKRRRGR. The tract at residues 1344 to 1378 is disordered; sequence KKGKGKKRRGRRSKKKRRRGRKEGEEDQNPPCPRL. Over residues 1346-1364 the composition is skewed to basic residues; that stretch reads GKGKKRRGRRSKKKRRRGR.

It belongs to the NBPF family. As to expression, widely expressed with highest levels in brain, ovary, mammary gland, skin and adipose tissue. Also expressed in testis. Detected in a number of tumors including osteosarcoma, mammary carcinoma and hepatocellular carcinoma.

It localises to the cytoplasm. The polypeptide is NBPF family member NBPF12 (Homo sapiens (Human)).